A 147-amino-acid polypeptide reads, in one-letter code: Hemoglobin subunit deltaH (147 aa).

The Globin domain maps to 3–147 (RLTDSEKAEV…MANALAHKYH (145 aa)). Heme b contacts are provided by His-64 and His-93.

The protein belongs to the globin family. In terms of assembly, heterotetramer of two delta chains and two alpha chains. Red blood cells.

The polypeptide is Hemoglobin subunit deltaH (Heterohyrax brucei (Yellow-spotted hyrax)).